A 415-amino-acid chain; its full sequence is MSPFLYLVLLVLGLHATIHCASPEGKVTACHSSQPNATLYKMSSINADFAFNLYRRFTVETPDKNIFFSPVSISAALVMLSFGACCSTQTEIVETLGFNLTDTPMVEIQHGFQHLICSLNFPKKELELQIGNALFIGKHLKPLAKFLNDVKTLYETEVFSTDFSNISAAKQEINSHVEMQTKGKVVGLIQDLKPNTIMVLVNYIHFKAQWANPFDPSKTEDSSSFLIDKTTTVQVPMMHQMEQYYHLVDMELNCTVLQMDYSKNALALFVLPKEGQMESVEAAMSSKTLKKWNRLLQKGWVDLFVPKFSISATYDLGATLLKMGIQHAYSENADFSGLTEDNGLKLSNAAHKAVLHIGEKGTEAAAVPEVELSDQPENTFLHPIIQIDRSFMLLILERSTRSILFLGKVVDPTEA.

The signal sequence occupies residues methionine 1–cysteine 20. N-linked (GlcNAc...) asparagine glycosylation is found at asparagine 36, asparagine 99, asparagine 165, and asparagine 253. Asparagine 293 and arginine 398 together coordinate thyroxine.

The protein belongs to the serpin family.

It localises to the secreted. Functionally, major thyroid hormone transport protein in serum. This Pan troglodytes (Chimpanzee) protein is Thyroxine-binding globulin (SERPINA7).